Here is a 600-residue protein sequence, read N- to C-terminus: DNA mismatch repair protein MutL (600 aa).

The interval 327–405 is disordered; it reads DGSRAATTGA…FSPQPAAAEP (79 aa). Positions 349–367 are enriched in polar residues; it reads PNSQRPQTAWSAETSSSRP.

Belongs to the DNA mismatch repair MutL/HexB family.

In terms of biological role, this protein is involved in the repair of mismatches in DNA. It is required for dam-dependent methyl-directed DNA mismatch repair. May act as a 'molecular matchmaker', a protein that promotes the formation of a stable complex between two or more DNA-binding proteins in an ATP-dependent manner without itself being part of a final effector complex. The protein is DNA mismatch repair protein MutL of Rhizobium johnstonii (strain DSM 114642 / LMG 32736 / 3841) (Rhizobium leguminosarum bv. viciae).